Reading from the N-terminus, the 459-residue chain is tRNA modification GTPase MnmE (459 aa).

R22, E85, and R124 together coordinate (6S)-5-formyl-5,6,7,8-tetrahydrofolate. Residues 221 to 380 form the TrmE-type G domain; sequence GLSTVIVGKP…LEIQIRDLFF (160 aa). N231 is a K(+) binding site. GTP-binding positions include 231–236, 250–256, and 275–278; these read NVGKSS, TEVAGTT, and DTAG. A Mg(2+)-binding site is contributed by S235. The K(+) site is built by T250, V252, and T255. Mg(2+) is bound at residue T256. A (6S)-5-formyl-5,6,7,8-tetrahydrofolate-binding site is contributed by K459.

The protein belongs to the TRAFAC class TrmE-Era-EngA-EngB-Septin-like GTPase superfamily. TrmE GTPase family. Homodimer. Heterotetramer of two MnmE and two MnmG subunits. It depends on K(+) as a cofactor.

It localises to the cytoplasm. Functionally, exhibits a very high intrinsic GTPase hydrolysis rate. Involved in the addition of a carboxymethylaminomethyl (cmnm) group at the wobble position (U34) of certain tRNAs, forming tRNA-cmnm(5)s(2)U34. In Staphylococcus aureus (strain MSSA476), this protein is tRNA modification GTPase MnmE.